An 855-amino-acid polypeptide reads, in one-letter code: Receptor-like protein kinase THESEUS 1 (855 aa).

Positions 1 to 22 (MVFTKSLLVLLWFLSCYTTTTS) are cleaved as a signal peptide. Residues 23-415 (SALFNPPDNY…GGSGSKSKKK (393 aa)) are Extracellular-facing. N-linked (GlcNAc...) asparagine glycosylation is found at Asn-41, Asn-64, Asn-75, Asn-114, Asn-118, Asn-136, Asn-143, Asn-154, Asn-168, Asn-225, Asn-242, Asn-288, Asn-353, and Asn-376. Residues 416 to 436 (AVIIGSLVGAVTLILLIAVCC) form a helical membrane-spanning segment. Over 437 to 855 (YCCLVASRKQ…FSQLVHPRGR (419 aa)) the chain is Cytoplasmic. Residues 510-783 (FDESSLLGVG…GDVLWNLEYA (274 aa)) enclose the Protein kinase domain. Residues 516–524 (LGVGGFGRV) and Lys-538 each bind ATP. Asp-634 functions as the Proton acceptor in the catalytic mechanism. A disordered region spans residues 822-855 (IDRGGVNSGTGTDDDAEDATTSAVFSQLVHPRGR).

The protein belongs to the protein kinase superfamily. Ser/Thr protein kinase family. Post-translationally, autophosphorylated. In terms of tissue distribution, expressed in most vegetative tissues, including leaves, stems and roots, primarily in expanding cells and vascular tissue.

The protein resides in the cell membrane. Its function is as follows. Receptor-like protein kinase required for cell elongation during vegetative growth, mostly in a brassinosteroid-(BR-) independent manner. Mediates the response of growing plant cells to the perturbation of cellulose synthesis and may act as a cell-wall-integrity sensor. Controls ectopic-lignin accumulation in cellulose-deficient mutant backgrounds. The protein is Receptor-like protein kinase THESEUS 1 (THE1) of Arabidopsis thaliana (Mouse-ear cress).